The primary structure comprises 506 residues: Maturase K (506 aa).

It belongs to the intron maturase 2 family. MatK subfamily.

It is found in the plastid. The protein localises to the chloroplast. Usually encoded in the trnK tRNA gene intron. Probably assists in splicing its own and other chloroplast group II introns. This Trifolium fragiferum (Strawberry clover) protein is Maturase K.